The following is a 458-amino-acid chain: Argininosuccinate lyase (458 aa).

Belongs to the lyase 1 family. Argininosuccinate lyase subfamily.

It is found in the cytoplasm. The enzyme catalyses 2-(N(omega)-L-arginino)succinate = fumarate + L-arginine. The protein operates within amino-acid biosynthesis; L-arginine biosynthesis; L-arginine from L-ornithine and carbamoyl phosphate: step 3/3. This Actinobacillus pleuropneumoniae serotype 3 (strain JL03) protein is Argininosuccinate lyase.